The following is a 562-amino-acid chain: Formate--tetrahydrofolate ligase (562 aa).

70–77 contacts ATP; the sequence is TPAGEGKS.

Belongs to the formate--tetrahydrofolate ligase family.

The enzyme catalyses (6S)-5,6,7,8-tetrahydrofolate + formate + ATP = (6R)-10-formyltetrahydrofolate + ADP + phosphate. It participates in one-carbon metabolism; tetrahydrofolate interconversion. In Paenarthrobacter aurescens (strain TC1), this protein is Formate--tetrahydrofolate ligase.